Here is a 308-residue protein sequence, read N- to C-terminus: Aspartate carbamoyltransferase catalytic subunit (308 aa).

Carbamoyl phosphate is bound by residues arginine 55 and threonine 56. Lysine 83 contacts L-aspartate. Residues arginine 105, histidine 133, and glutamine 136 each contribute to the carbamoyl phosphate site. L-aspartate is bound by residues arginine 166 and arginine 220. The carbamoyl phosphate site is built by glycine 261 and proline 262.

It belongs to the aspartate/ornithine carbamoyltransferase superfamily. ATCase family. As to quaternary structure, heterododecamer (2C3:3R2) of six catalytic PyrB chains organized as two trimers (C3), and six regulatory PyrI chains organized as three dimers (R2).

It carries out the reaction carbamoyl phosphate + L-aspartate = N-carbamoyl-L-aspartate + phosphate + H(+). Its pathway is pyrimidine metabolism; UMP biosynthesis via de novo pathway; (S)-dihydroorotate from bicarbonate: step 2/3. Its function is as follows. Catalyzes the condensation of carbamoyl phosphate and aspartate to form carbamoyl aspartate and inorganic phosphate, the committed step in the de novo pyrimidine nucleotide biosynthesis pathway. This Chlorobaculum parvum (strain DSM 263 / NCIMB 8327) (Chlorobium vibrioforme subsp. thiosulfatophilum) protein is Aspartate carbamoyltransferase catalytic subunit.